An 870-amino-acid polypeptide reads, in one-letter code: Leucine--tRNA ligase (870 aa).

Positions 43-53 (PYPSGRIHMGH) match the 'HIGH' region motif. The 'KMSKS' region signature appears at 630–634 (KMSKS). Lysine 633 is an ATP binding site.

It belongs to the class-I aminoacyl-tRNA synthetase family.

It localises to the cytoplasm. The enzyme catalyses tRNA(Leu) + L-leucine + ATP = L-leucyl-tRNA(Leu) + AMP + diphosphate. This Parvibaculum lavamentivorans (strain DS-1 / DSM 13023 / NCIMB 13966) protein is Leucine--tRNA ligase.